The following is a 117-amino-acid chain: MDKVYEAALLLDFYGQLLTKRQFEILDLYLNNDYSLGEIAEHLNISRQGVYDNIKRGRAMLDRMEEKLGLVHKFLQQKNRALEILKDIKSIDISSMSVEDAKILKRVEERIEEIVES.

It belongs to the UPF0122 family.

Its function is as follows. Might take part in the signal recognition particle (SRP) pathway. This is inferred from the conservation of its genetic proximity to ftsY/ffh. May be a regulatory protein. This is UPF0122 protein Cthe_0771 from Acetivibrio thermocellus (strain ATCC 27405 / DSM 1237 / JCM 9322 / NBRC 103400 / NCIMB 10682 / NRRL B-4536 / VPI 7372) (Clostridium thermocellum).